A 213-amino-acid polypeptide reads, in one-letter code: MHQQKRQPELVEGNLPVFVFPTELIFYADDQSTHKQVLTLYNPYEFALKFKVLCTTPNKYVVVDAAGAVKPQCCVDIVIRHRDVRSCHYGVIDKFRLQVSEQSQRKALGRKEVVATLLPSAKEQQKEEEEKRLKEHLTESLFFEQSFQPENRAVSSGPSLLTVFLGVVCIAALMLPTLGDVESLVPLYLHLSVNQKLVAAYILGLITMAILRT.

Positions 16 to 143 (PVFVFPTELI…KEHLTESLFF (128 aa)) constitute an MSP domain. 2 consecutive transmembrane segments (helical) span residues 159–179 (SLLT…PTLG) and 191–211 (LSVN…MAIL). A Nuclear export signal motif is present at residues 205 to 208 (LITM).

Its subcellular location is the endoplasmic reticulum membrane. It is found in the golgi apparatus membrane. Functionally, plays a role in differentiation and/or proliferation of mesenchymal stem cells. Proposed to be involved in epithelial-to-mesenchymal transition (EMT). However, another study suggests that it is not required for EMT or stem cell self-renewal and acts during later stages of differentiation. This chain is Motile sperm domain-containing protein 1 (MOSPD1), found in Homo sapiens (Human).